The sequence spans 366 residues: tRNA/tmRNA (uracil-C(5))-methyltransferase (366 aa).

Positions 190, 218, 223, 239, and 299 each coordinate S-adenosyl-L-methionine. Cysteine 324 acts as the Nucleophile in catalysis. Catalysis depends on glutamate 358, which acts as the Proton acceptor.

This sequence belongs to the class I-like SAM-binding methyltransferase superfamily. RNA M5U methyltransferase family. TrmA subfamily.

It carries out the reaction uridine(54) in tRNA + S-adenosyl-L-methionine = 5-methyluridine(54) in tRNA + S-adenosyl-L-homocysteine + H(+). It catalyses the reaction uridine(341) in tmRNA + S-adenosyl-L-methionine = 5-methyluridine(341) in tmRNA + S-adenosyl-L-homocysteine + H(+). Dual-specificity methyltransferase that catalyzes the formation of 5-methyluridine at position 54 (m5U54) in all tRNAs, and that of position 341 (m5U341) in tmRNA (transfer-mRNA). The protein is tRNA/tmRNA (uracil-C(5))-methyltransferase of Salmonella choleraesuis (strain SC-B67).